Here is a 109-residue protein sequence, read N- to C-terminus: Thioredoxin-like protein slr1139 (109 aa).

The 106-residue stretch at 2–107 (SLLEITDAEF…LLELLKEELD (106 aa)) folds into the Thioredoxin domain. A disulfide bridge connects residues C31 and C34.

The protein belongs to the thioredoxin family.

The sequence is that of Thioredoxin-like protein slr1139 from Synechocystis sp. (strain ATCC 27184 / PCC 6803 / Kazusa).